The sequence spans 255 residues: Large ribosomal subunit protein uL4 (255 aa).

It belongs to the universal ribosomal protein uL4 family. In terms of assembly, part of the 50S ribosomal subunit.

Its function is as follows. One of the primary rRNA binding proteins, this protein initially binds near the 5'-end of the 23S rRNA. It is important during the early stages of 50S assembly. It makes multiple contacts with different domains of the 23S rRNA in the assembled 50S subunit and ribosome. Forms part of the polypeptide exit tunnel. The polypeptide is Large ribosomal subunit protein uL4 (Thermococcus gammatolerans (strain DSM 15229 / JCM 11827 / EJ3)).